A 446-amino-acid chain; its full sequence is UDP-N-acetylmuramoylalanine--D-glutamate ligase (446 aa).

An ATP-binding site is contributed by 116–122; sequence GSNGKTT.

The protein belongs to the MurCDEF family.

It localises to the cytoplasm. The enzyme catalyses UDP-N-acetyl-alpha-D-muramoyl-L-alanine + D-glutamate + ATP = UDP-N-acetyl-alpha-D-muramoyl-L-alanyl-D-glutamate + ADP + phosphate + H(+). Its pathway is cell wall biogenesis; peptidoglycan biosynthesis. Functionally, cell wall formation. Catalyzes the addition of glutamate to the nucleotide precursor UDP-N-acetylmuramoyl-L-alanine (UMA). The protein is UDP-N-acetylmuramoylalanine--D-glutamate ligase of Marinobacter nauticus (strain ATCC 700491 / DSM 11845 / VT8) (Marinobacter aquaeolei).